Here is a 161-residue protein sequence, read N- to C-terminus: MNIRIGHGFDVHKFGGGSPLLLGGVHIPYETGLIAHSDGDVVLHAISDAVLGAVALGDIGKHFPDTDEEFKGADSRHLLRHCYRLAKEKGYSMGNLDVTIIAQAPKMAPHIEAIREVLALDFETDTDNINVKATTTEKLGFTGRKEGIAVEAVVLLVKSAD.

Residues Asp10 and His12 each contribute to the a divalent metal cation site. 4-CDP-2-C-methyl-D-erythritol 2-phosphate-binding positions include 10-12 and 36-37; these read DVH and HS. His44 is a binding site for a divalent metal cation. 4-CDP-2-C-methyl-D-erythritol 2-phosphate-binding positions include 58–60, 63–67, 102–108, 134–137, Phe141, and Arg144; these read DIG, FPDTD, AQAPKMA, and TTTE.

It belongs to the IspF family. In terms of assembly, homotrimer. A divalent metal cation serves as cofactor.

It carries out the reaction 4-CDP-2-C-methyl-D-erythritol 2-phosphate = 2-C-methyl-D-erythritol 2,4-cyclic diphosphate + CMP. Its pathway is isoprenoid biosynthesis; isopentenyl diphosphate biosynthesis via DXP pathway; isopentenyl diphosphate from 1-deoxy-D-xylulose 5-phosphate: step 4/6. Functionally, involved in the biosynthesis of isopentenyl diphosphate (IPP) and dimethylallyl diphosphate (DMAPP), two major building blocks of isoprenoid compounds. Catalyzes the conversion of 4-diphosphocytidyl-2-C-methyl-D-erythritol 2-phosphate (CDP-ME2P) to 2-C-methyl-D-erythritol 2,4-cyclodiphosphate (ME-CPP) with a corresponding release of cytidine 5-monophosphate (CMP). The protein is 2-C-methyl-D-erythritol 2,4-cyclodiphosphate synthase of Shewanella sediminis (strain HAW-EB3).